The primary structure comprises 190 residues: Putative manganese efflux pump MntP (190 aa).

The next 6 helical transmembrane spans lie at 5 to 25 (ALLA…VATG), 41 to 61 (WHFG…GQGI), 64 to 84 (FVDA…GLKM), 105 to 125 (TSLI…GVTL), 127 to 147 (MLGL…LGLT), and 169 to 189 (ILGG…SGVF).

The protein belongs to the MntP (TC 9.B.29) family.

It is found in the cell inner membrane. Functionally, probably functions as a manganese efflux pump. The sequence is that of Putative manganese efflux pump MntP from Oleidesulfovibrio alaskensis (strain ATCC BAA-1058 / DSM 17464 / G20) (Desulfovibrio alaskensis).